Here is a 373-residue protein sequence, read N- to C-terminus: C-C chemokine receptor type 2 (373 aa).

At 1–60 (MEDSNMLPQFIHGILSTSHSLFPRSIQELDEGATTPYDYDDGEPCHKTSVKQIGAWILPP) the chain is on the extracellular side. The helical transmembrane segment at 61–81 (LYSLVFIFGFVGNMLVIIILI) threads the bilayer. The Cytoplasmic portion of the chain corresponds to 82–91 (SCKKLKSMTD). A helical membrane pass occupies residues 92 to 112 (IYLFNLAISDLLFLLTLPFWA). The Extracellular segment spans residues 113-128 (HYAANEWVFGNIMCKL). Cysteines 126 and 203 form a disulfide. Residues 129-149 (FTGLYHIGYFGGIFFIILLTI) form a helical membrane-spanning segment. At 150–170 (DRYLAIVHAVFALKARTVTFG) the chain is on the cytoplasmic side. Tyr152 is subject to Phosphotyrosine; by JAK2. A helical membrane pass occupies residues 171–191 (VITSVVTWVVAVFASLPGIIF). At 192 to 220 (TKSEQEDDQHTCGPYFPTIWKNFQTIMRN) the chain is on the extracellular side. A helical transmembrane segment spans residues 221–241 (ILSLILPLLVMVICYSGILHT). The Cytoplasmic segment spans residues 242 to 256 (LFRCRNEKKRHRAVR). The chain crosses the membrane as a helical span at residues 257–277 (LIFAIMIVYFLFWTPYNIVLF). At 278-301 (LTTFQEFLGMSNCVVDMHLDQAMQ) the chain is on the extracellular side. The chain crosses the membrane as a helical span at residues 302–322 (VTETLGMTHCCVNPIIYAFVG). Residues 323–373 (EKFRRYLSIFFRKHIAKNLCKQCPVFYRETADRVSSTFTPSTGEQEVSVGL) lie on the Cytoplasmic side of the membrane.

Belongs to the G-protein coupled receptor 1 family. Interacts with ARRB1. Interacts (via extracellular N-terminal region) with beta-defensin DEFB106A/DEFB106B; this interaction may preferentially require specific tyrosine sulfation on CCR2. Interacts with NUP85; the interaction is required for CCR2 clusters formation on the cell membrane and CCR2 signaling. In terms of processing, N-glycosylated. Sulfation increases the affinity for both monomeric and dimeric CCL2 with stronger binding to the monomeric form. Binding of sulfated CCR2 to CCL2 promotes conversion of CCL2 from dimer to monomer. Expressed in lung, spleen, kidney, thymus and macrophages.

The protein resides in the cell membrane. Key functional receptor for CCL2 but can also bind CCL7 and CCL12. Its binding with CCL2 on monocytes and macrophages mediates chemotaxis and migration induction through the activation of the PI3K cascade, the small G protein Rac and lamellipodium protrusion. Also acts as a receptor for the beta-defensin DEFB106A/DEFB106B. Regulates the expression of T-cell inflammatory cytokines and T-cell differentiation, promoting the differentiation of T-cells into T-helper 17 cells (Th17) during inflammation. Facilitates the export of mature thymocytes by enhancing directional movement of thymocytes to sphingosine-1-phosphate stimulation and up-regulation of S1P1R expression; signals through the JAK-STAT pathway to regulate FOXO1 activity leading to an increased expression of S1P1R. Plays an important role in mediating peripheral nerve injury-induced neuropathic pain. Increases NMDA-mediated synaptic transmission in both dopamine D1 and D2 receptor-containing neurons, which may be caused by MAPK/ERK-dependent phosphorylation of GRIN2B/NMDAR2B. Mediates the recruitment of macrophages and monocytes to the injury site following brain injury. The polypeptide is C-C chemokine receptor type 2 (Ccr2) (Rattus norvegicus (Rat)).